The following is a 525-amino-acid chain: GMP synthase [glutamine-hydrolyzing] (525 aa).

Residues 9–207 (RILILDFGSQ…ILDICECEAL (199 aa)) enclose the Glutamine amidotransferase type-1 domain. Residue cysteine 86 is the Nucleophile of the active site. Residues histidine 181 and glutamate 183 contribute to the active site. One can recognise a GMPS ATP-PPase domain in the interval 208–400 (WTPSKIAEDA…LGLPYDMVYR (193 aa)). ATP is bound at residue 235–241 (SGGVDSS).

As to quaternary structure, homodimer.

The enzyme catalyses XMP + L-glutamine + ATP + H2O = GMP + L-glutamate + AMP + diphosphate + 2 H(+). It participates in purine metabolism; GMP biosynthesis; GMP from XMP (L-Gln route): step 1/1. Its function is as follows. Catalyzes the synthesis of GMP from XMP. This chain is GMP synthase [glutamine-hydrolyzing], found in Pseudomonas fluorescens (strain SBW25).